The following is a 298-amino-acid chain: uncharacterized protein (298 aa).

The 58-residue stretch at 5 to 62 (TSLSAMRIFEAAARLGSFRAAAEELNLSPSAVSHAIMRLERDLGVALFERTTRSVSLT) folds into the HTH lysR-type domain. The H-T-H motif DNA-binding region spans 22–42 (FRAAAEELNLSPSAVSHAIMR).

Belongs to the LysR transcriptional regulatory family.

This is an uncharacterized protein from Sinorhizobium fredii (strain NBRC 101917 / NGR234).